A 132-amino-acid chain; its full sequence is Putative nickel-responsive regulator (132 aa).

Ni(2+) is bound by residues His-77, His-88, His-90, and Cys-96.

The protein belongs to the transcriptional regulatory CopG/NikR family. It depends on Ni(2+) as a cofactor.

Functionally, transcriptional regulator. In Brucella abortus (strain S19), this protein is Putative nickel-responsive regulator.